Reading from the N-terminus, the 497-residue chain is Probable cytosol aminopeptidase (497 aa).

Residues lysine 267 and aspartate 272 each contribute to the Mn(2+) site. The active site involves lysine 279. Mn(2+)-binding residues include aspartate 290, aspartate 349, and glutamate 351. Residue arginine 353 is part of the active site.

The protein belongs to the peptidase M17 family. Requires Mn(2+) as cofactor.

Its subcellular location is the cytoplasm. It carries out the reaction Release of an N-terminal amino acid, Xaa-|-Yaa-, in which Xaa is preferably Leu, but may be other amino acids including Pro although not Arg or Lys, and Yaa may be Pro. Amino acid amides and methyl esters are also readily hydrolyzed, but rates on arylamides are exceedingly low.. The enzyme catalyses Release of an N-terminal amino acid, preferentially leucine, but not glutamic or aspartic acids.. Its function is as follows. Presumably involved in the processing and regular turnover of intracellular proteins. Catalyzes the removal of unsubstituted N-terminal amino acids from various peptides. The sequence is that of Probable cytosol aminopeptidase from Pseudomonas putida (strain ATCC 47054 / DSM 6125 / CFBP 8728 / NCIMB 11950 / KT2440).